Consider the following 202-residue polypeptide: Small ribosomal subunit protein uS4 (202 aa).

The segment at 18–44 (LPGLTRKSARREYPPGQHGQGRRKRSE) is disordered. An S4 RNA-binding domain is found at 90-152 (MRLDNTVFRL…DRSRKLIEAN (63 aa)).

The protein belongs to the universal ribosomal protein uS4 family. Part of the 30S ribosomal subunit. Contacts protein S5. The interaction surface between S4 and S5 is involved in control of translational fidelity.

In terms of biological role, one of the primary rRNA binding proteins, it binds directly to 16S rRNA where it nucleates assembly of the body of the 30S subunit. Its function is as follows. With S5 and S12 plays an important role in translational accuracy. In Picosynechococcus sp. (strain ATCC 27264 / PCC 7002 / PR-6) (Agmenellum quadruplicatum), this protein is Small ribosomal subunit protein uS4.